We begin with the raw amino-acid sequence, 89 residues long: Small ribosomal subunit protein uS15 (89 aa).

Belongs to the universal ribosomal protein uS15 family. Part of the 30S ribosomal subunit. Forms a bridge to the 50S subunit in the 70S ribosome, contacting the 23S rRNA.

Its function is as follows. One of the primary rRNA binding proteins, it binds directly to 16S rRNA where it helps nucleate assembly of the platform of the 30S subunit by binding and bridging several RNA helices of the 16S rRNA. Functionally, forms an intersubunit bridge (bridge B4) with the 23S rRNA of the 50S subunit in the ribosome. This is Small ribosomal subunit protein uS15 from Roseobacter denitrificans (strain ATCC 33942 / OCh 114) (Erythrobacter sp. (strain OCh 114)).